The chain runs to 61 residues: MAKKSMIAKQQRKAKFSTQAYTRCNICGRPHSVYRDFGLCRVCLRKMANEGLIPGMRKASW.

Zn(2+) is bound by residues C24, C27, C40, and C43.

It belongs to the universal ribosomal protein uS14 family. Zinc-binding uS14 subfamily. As to quaternary structure, part of the 30S ribosomal subunit. Contacts proteins S3 and S10. It depends on Zn(2+) as a cofactor.

Functionally, binds 16S rRNA, required for the assembly of 30S particles and may also be responsible for determining the conformation of the 16S rRNA at the A site. The polypeptide is Small ribosomal subunit protein uS14 (Sulfurovum sp. (strain NBC37-1)).